We begin with the raw amino-acid sequence, 369 residues long: Alanine racemase (369 aa).

Lysine 35 (proton acceptor; specific for D-alanine) is an active-site residue. The residue at position 35 (lysine 35) is an N6-(pyridoxal phosphate)lysine. Arginine 130 provides a ligand contact to substrate. Tyrosine 257 (proton acceptor; specific for L-alanine) is an active-site residue. A substrate-binding site is contributed by methionine 305.

This sequence belongs to the alanine racemase family. Pyridoxal 5'-phosphate serves as cofactor.

The catalysed reaction is L-alanine = D-alanine. It functions in the pathway amino-acid biosynthesis; D-alanine biosynthesis; D-alanine from L-alanine: step 1/1. Its function is as follows. Catalyzes the interconversion of L-alanine and D-alanine. May also act on other amino acids. The sequence is that of Alanine racemase (alr) from Paracidovorax citrulli (strain AAC00-1) (Acidovorax citrulli).